A 445-amino-acid chain; its full sequence is tRNA modification GTPase MnmE (445 aa).

Residues R20, E79, and K119 each coordinate (6S)-5-formyl-5,6,7,8-tetrahydrofolate. Residues 215–371 form the TrmE-type G domain; that stretch reads GLKLAIIGPP…ILKNIENIAE (157 aa). Residue N225 coordinates K(+). Residues 225–230, 244–250, and 269–272 contribute to the GTP site; these read NTGKSS, SNIAGTT, and DTAG. A Mg(2+)-binding site is contributed by S229. K(+) contacts are provided by S244, I246, and T249. T250 is a binding site for Mg(2+). K445 is a binding site for (6S)-5-formyl-5,6,7,8-tetrahydrofolate.

This sequence belongs to the TRAFAC class TrmE-Era-EngA-EngB-Septin-like GTPase superfamily. TrmE GTPase family. As to quaternary structure, homodimer. Heterotetramer of two MnmE and two MnmG subunits. K(+) is required as a cofactor.

The protein resides in the cytoplasm. Functionally, exhibits a very high intrinsic GTPase hydrolysis rate. Involved in the addition of a carboxymethylaminomethyl (cmnm) group at the wobble position (U34) of certain tRNAs, forming tRNA-cmnm(5)s(2)U34. The chain is tRNA modification GTPase MnmE from Rickettsia typhi (strain ATCC VR-144 / Wilmington).